The chain runs to 158 residues: MASRSMRLLLLLSCLAKTGVLGDIIMRPSCAPGWFYHKSNCYGYFRKLRNWSDAELECQSYGNGAHLASILSLKEASTIAEYISGYQRSQPIWIGLHDPQKRQQWQWIDGAMYLYRSWSGKSMGGNKHCAEMSSNNNFLTWSSNECNKRQHFLCKYRP.

An N-terminal signal peptide occupies residues 1–22 (MASRSMRLLLLLSCLAKTGVLG). C30 and C41 are oxidised to a cystine. In terms of domain architecture, C-type lectin spans 37 to 155 (HKSNCYGYFR…CNKRQHFLCK (119 aa)). N-linked (GlcNAc...) asparagine glycosylation occurs at N50. Disulfide bonds link C58–C154 and C129–C146. A carbohydrate is bound by residues 98–103 (DPQKRQ) and 135–137 (NNN).

In terms of tissue distribution, highly expressed in the gastrointestinal tract including the duodenum, jejunum, ileum, ileocecum, appendix, descending colon, pancreas and small intestine. Weakly expressed in normal colon and stomach. Strongly expressed in most colorectal tumors than in normal colon. Preferentially expressed in mucinous tumors and in some cases neuro-endocrine tumors. Expressed in mucus-secreting cells and enterocyte-like cells. In small intestine expressed at the basal perinuclear zone of goblet cells.

Its subcellular location is the secreted. In terms of biological role, calcium-independent lectin displaying mannose-binding specificity and able to maintain carbohydrate recognition activity in an acidic environment. May be involved in inflammatory and metaplastic responses of the gastrointestinal epithelium. The sequence is that of Regenerating islet-derived protein 4 (REG4) from Homo sapiens (Human).